We begin with the raw amino-acid sequence, 341 residues long: GTPase Obg (341 aa).

The 159-residue stretch at 1–159 (MKFLDQAKVY…RTLWLRLKLI (159 aa)) folds into the Obg domain. One can recognise an OBG-type G domain in the interval 160–327 (ADAGLIGLPN…MLRAGAHMIE (168 aa)). GTP contacts are provided by residues 166-173 (GLPNAGKS), 191-195 (FTTLY), 212-215 (DIPG), 279-282 (SQID), and 308-310 (SAV). The Mg(2+) site is built by S173 and T193.

Belongs to the TRAFAC class OBG-HflX-like GTPase superfamily. OBG GTPase family. As to quaternary structure, monomer. The cofactor is Mg(2+).

It is found in the cytoplasm. Its function is as follows. An essential GTPase which binds GTP, GDP and possibly (p)ppGpp with moderate affinity, with high nucleotide exchange rates and a fairly low GTP hydrolysis rate. Plays a role in control of the cell cycle, stress response, ribosome biogenesis and in those bacteria that undergo differentiation, in morphogenesis control. This is GTPase Obg from Bartonella quintana (strain Toulouse) (Rochalimaea quintana).